The primary structure comprises 460 residues: Phosphoglucosamine mutase (460 aa).

Ser-102 serves as the catalytic Phosphoserine intermediate. Residues Ser-102, Asp-241, Asp-243, and Asp-245 each coordinate Mg(2+). A Phosphoserine modification is found at Ser-102.

Belongs to the phosphohexose mutase family. It depends on Mg(2+) as a cofactor. Post-translationally, activated by phosphorylation.

The enzyme catalyses alpha-D-glucosamine 1-phosphate = D-glucosamine 6-phosphate. Functionally, catalyzes the conversion of glucosamine-6-phosphate to glucosamine-1-phosphate. This chain is Phosphoglucosamine mutase, found in Verminephrobacter eiseniae (strain EF01-2).